The sequence spans 1302 residues: Neuroglian (1302 aa).

The signal sequence occupies residues 1-23 (MWRQSTILAALLVALLCAGSAES). Residues 24 to 1138 (KGNRPPRITK…ANAGWFIGMM (1115 aa)) are Extracellular-facing. Ig-like C2-type domains lie at 29 to 133 (PRIT…AELN), 134 to 225 (AFKD…YKIG), 245 to 330 (PPVR…QSFS), 339 to 426 (PYFT…VYLN), 432 to 524 (PTIS…TRIT), and 521 to 610 (TRIT…ANLI). Disulfide bonds link cysteine 59/cysteine 111, cysteine 155/cysteine 212, cysteine 268/cysteine 317, and cysteine 360/cysteine 410. Residues asparagine 182 and asparagine 198 are each glycosylated (N-linked (GlcNAc...) asparagine). 2 N-linked (GlcNAc...) asparagine glycosylation sites follow: asparagine 411 and asparagine 448. Fibronectin type-III domains lie at 614 to 711 (VPNA…TQPD), 716 to 813 (NPDN…SGED), 818 to 915 (APTN…TPEG), 916 to 1017 (VPSP…LKDA), and 1021 to 1119 (APAT…TVEG). Cysteine 625 and cysteine 706 form a disulfide bridge. N-linked (GlcNAc...) asparagine glycosylation is found at asparagine 652 and asparagine 683. Asparagine 821 is a glycosylation site (N-linked (GlcNAc...) asparagine). A glycan (N-linked (GlcNAc...) asparagine) is linked at asparagine 1125. Residues 1139-1154 (LALAFIIILFIIICII) form a helical membrane-spanning segment. The Cytoplasmic portion of the chain corresponds to 1155 to 1302 (RRNRGGKYDV…AAAGAVATYV (148 aa)). Over residues 1172 to 1182 (GRRDYPEEGGF) the composition is skewed to basic and acidic residues. Disordered stretches follow at residues 1172 to 1223 (GRRD…GDTG) and 1236 to 1291 (VPGK…ASNG). Residues 1188–1203 (PLDNKSAGRQSVSSAN) are compositionally biased toward polar residues. Positions 1253–1275 (AAAHQAAPTAGGSGAAGSAAAAG) are enriched in low complexity.

In terms of assembly, forms a complex with Nrx-IV/Nrx and Cont. Forms a complex composed of septate junction proteins Nrx-IV/Nrx, Tsf2/MTf, Cont and Nrg during late embryogenesis. In terms of tissue distribution, restricted to the surface of neurons and glia in the developing nervous system. As to expression, restricted to non-neuronal tissues.

Its subcellular location is the cell membrane. It is found in the cell junction. The protein resides in the septate junction. Essential for septate junctions. Septate junctions, which are the equivalent of vertebrate tight junctions, are characterized by regular arrays of transverse structures that span the intermembrane space and form a physical barrier to diffusion. Required for formation of the hemolymph-brain barrier (the insect blood-brain barrier). Vital for embryonic development. Involved in the targeting for degradation or recycling of certain septate junction components, including kune and bou/boudin, by regulating their endocytosis. Its function is as follows. May play a role in neural and glial cell adhesion in the developing embryo. In terms of biological role, may be a more general cell adhesion molecule involved in non-neuronal tissues and imaginal disk morphogenesis. The protein is Neuroglian (Nrg) of Drosophila melanogaster (Fruit fly).